Here is a 489-residue protein sequence, read N- to C-terminus: Rhamnulokinase (489 aa).

13 to 17 contributes to the ATP binding site; sequence ASSGR. A disulfide bridge connects residues Cys-68 and Cys-222. Substrate is bound by residues Gly-83 and 236–238; that span reads HDT. Residue Asp-237 is the Proton acceptor of the active site. Residue Thr-259 coordinates ATP. Residue Asn-296 coordinates substrate. Gln-304 contributes to the ATP binding site. Cys-353 and Cys-370 are oxidised to a cystine. Gly-402 provides a ligand contact to ATP. Cys-413 and Cys-417 are disulfide-bonded.

It belongs to the rhamnulokinase family. In terms of assembly, monomer. Requires Mg(2+) as cofactor.

The catalysed reaction is L-rhamnulose + ATP = L-rhamnulose 1-phosphate + ADP + H(+). Its pathway is carbohydrate degradation; L-rhamnose degradation; glycerone phosphate from L-rhamnose: step 2/3. Functionally, involved in the catabolism of L-rhamnose (6-deoxy-L-mannose). Catalyzes the transfer of the gamma-phosphate group from ATP to the 1-hydroxyl group of L-rhamnulose to yield L-rhamnulose 1-phosphate. The sequence is that of Rhamnulokinase from Escherichia coli (strain K12 / DH10B).